A 1075-amino-acid chain; its full sequence is MNAPTPLPIGLPDYAELHCISNFTFLTGASHPHELVARAQAFGYRALALTDECSVAGTVRAHMAAKEAGLKLIIGSRFTVRDAQGEPWLRLVLLAQDIDGYGNLCECITQARLAAPKGDYRLLADDLAAPAGELAHLRGMPHCLAILLPDYDPDPRHLLAQAQWCRQVFGDRLSMALELPLRHADDRHRGTVAAVSEQTDVPMVATGDVAMHSRQRKPLHDVLTAIRLSRPIAECGLALAPSAEQAMRTRMQLAFFYQGERGAQVLRRSVELASLCDFSLDEIAYEYPHEVVPEGQTPAGYLLAEVMAGAARRYGKDIPSKVRAQLDEELALIAELRYEPFFLTVYDVVRFARSQSILCQGRGSAANSAVCYCLGITEVNPESGNTLFARFLSRARNEPPDIDVDFEHQRREEVIQYIYKKYGVTRTALAAALITYRTRSALRDVGRALGIDLGVIEQVAKAQAWWDGRHEFAQRAGQQGLDPESPLVQRWAGLIEQLRGFPRHLSQHVGGFVIAQGKLSRLVPIENAAMPERRVIQWDKDDLESLRLLKVDVLALGMLTAIRRTLDMLDALPGRRAHYGAPDKLAMQHLPDEDTATYEMICRAETIGVFQIESRAQQSMLPRLRPRTYYDLVIQVAIVRPGPIQGGMVHPYLQRREAVRNGNPDCVTYPGPEVKAVLERTLGVPIFQEQVMEIAMKAGGFTADEADRLRRDMAAWKRKGNLTQHQARLMKEMVEVRHYDPAFVEALCRQMEGFAEYGFPESHAAGFARLAYVSSFLKCHEPAAFFAALLNSQPMGFYSPSQLVQEARRSRVRVLPADVTASAWDSTLHARPDGAGGQPDIRLGLNRIRGMRPAAGERIVVARAQAPFSSVEDLAHRAALDRHDLSVLAAANALLSLAGHRRQALWQTLALQEPGQDHALLRQARPVEAPLVLPAPSLGEEVVADYGSLGLSLQSHPLSLLRPRLERMRFVTAAALAGYRNGQLARACGIVTVRQRPGTAKGTIFVSIEDETGAVNVVLWPRLIERQRREVLHARLLGVYGKWQCERETRHLVAQHLVDLTPLLGRLASSSRDFH.

This sequence belongs to the DNA polymerase type-C family. DnaE2 subfamily.

Its subcellular location is the cytoplasm. The catalysed reaction is DNA(n) + a 2'-deoxyribonucleoside 5'-triphosphate = DNA(n+1) + diphosphate. In terms of biological role, DNA polymerase involved in damage-induced mutagenesis and translesion synthesis (TLS). It is not the major replicative DNA polymerase. This chain is Error-prone DNA polymerase, found in Ralstonia nicotianae (strain ATCC BAA-1114 / GMI1000) (Ralstonia solanacearum).